Here is a 423-residue protein sequence, read N- to C-terminus: MAKQIQAIRGMNDILPTQSPLWQKLEAVLRDTVAAYGYSEIRTPIVESTDLFKRSIGEVTDIVEKEMYTFADRNGDLLTLRPEGTASTVRAGNEHGLLYNQEQRLWYMGPMFRHERPQKGRYRQFNQFGVEVYGIASADIDAEVLMMSHRLWQKLGISEHVKLELNTLGDAQERAAYRDALVEFLEQHEEKLDEDSQRRMYSNPLRVLDSKNPDVQALLGDAPALMDYLGEESRGHFAHLCELLEAVGIQYEINPRLVRGLDYYNRTVFEWVTDSLGAQGTVLAGGRYDGLVGQLGGKDTPAVGFAMGLERIVLMLETLALTDDVSGPVDVYVTAMGDDCRVAAIKVAQQLREVDGLKVMSHCGGGNFKKQMKRADKSGAKLAIVIGETELANGQVALKYLREEKEQELVAQDSLAAYVAELI.

The protein belongs to the class-II aminoacyl-tRNA synthetase family. As to quaternary structure, homodimer.

It localises to the cytoplasm. It catalyses the reaction tRNA(His) + L-histidine + ATP = L-histidyl-tRNA(His) + AMP + diphosphate + H(+). The sequence is that of Histidine--tRNA ligase from Shewanella loihica (strain ATCC BAA-1088 / PV-4).